Reading from the N-terminus, the 359-residue chain is Transcription factor MafA (359 aa).

A Phosphoserine modification is found at serine 14. Lysine 32 is covalently cross-linked (Glycyl lysine isopeptide (Lys-Gly) (interchain with G-Cter in SUMO2)). Disordered regions lie at residues 40 to 105 (RFCH…VGGA) and 172 to 226 (GGGA…AGHH). A compositionally biased stretch (low complexity) spans 46 to 73 (PPGSLSSTPLSTPCSSVPSSPSFCAPSP). Phosphoserine is present on serine 49. Phosphothreonine is present on residues threonine 53 and threonine 57. 2 positions are modified to phosphoserine: serine 61 and serine 65. Gly residues predominate over residues 74–84 (GTGGGAGGGGS). The segment covering 181–209 (GHHHGAHHTAHHHHSAHHHHHHHHHHGGS) has biased composition (basic residues). A compositionally biased stretch (gly residues) spans 210–224 (GHHGGGAGHGGGGAG). Residues 260–285 (RLKQKRRTLKNRGYAQSCRFKRVQQR) form a basic motif region. In terms of domain architecture, bZIP spans 260 to 323 (RLKQKRRTLK…DLYKEKYEKL (64 aa)). The interval 288–309 (LESEKCQLQSQVEQLKLEVGRL) is leucine-zipper. The interval 322–359 (KLAGRGGPGGAGGAGFPREPSPAQAGPGAAKGAPDFFL) is disordered. Gly residues predominate over residues 325–336 (GRGGPGGAGGAG). Over residues 343–359 (PAQAGPGAAKGAPDFFL) the composition is skewed to low complexity.

Belongs to the bZIP family. Maf subfamily. As to quaternary structure, forms homodimers. Interacts with NEUROD1 and PDX1. May interact with MAFB, FOS, JUN and PCAF. Post-translationally, ubiquitinated, leading to its degradation by the proteasome. In terms of processing, phosphorylated at tyrosines. In terms of tissue distribution, expressed in brain, lung, spleen, pancreas and kidney. In the pancreas, expressed in the insulin-producing beta-cells of the islets of Langerhans (at protein level). Also expressed in the eye.

The protein resides in the nucleus. In terms of biological role, transcriptional factor that activates insulin gene expression. Acts synergistically with NEUROD1/BETA2 and PDX1. Binds the insulin enhancer C1/RIPE3b element. Binds to consensus TRE-type MARE 5'-TGCTGACTCAGCA-3' DNA sequence. This is Transcription factor MafA (Mafa) from Mus musculus (Mouse).